Consider the following 213-residue polypeptide: Uridine kinase (213 aa).

Position 15 to 22 (15 to 22) interacts with ATP; it reads GASASGKS.

The protein belongs to the uridine kinase family.

It is found in the cytoplasm. It carries out the reaction uridine + ATP = UMP + ADP + H(+). The catalysed reaction is cytidine + ATP = CMP + ADP + H(+). It participates in pyrimidine metabolism; CTP biosynthesis via salvage pathway; CTP from cytidine: step 1/3. Its pathway is pyrimidine metabolism; UMP biosynthesis via salvage pathway; UMP from uridine: step 1/1. This is Uridine kinase from Escherichia coli O157:H7.